We begin with the raw amino-acid sequence, 914 residues long: Inter-alpha-trypsin inhibitor heavy chain H1 (914 aa).

Residues 1 to 30 (MDGAAVGLRVLLGLGLVSLLTLEAMPAAWG) form the signal peptide. Residues 31-36 (LATTGR) constitute a propeptide that is removed on maturation. In terms of domain architecture, VIT spans 39-168 (AREKRQAVDT…KATFQLTYEE (130 aa)). A glycan (S-linked (Hex...) cysteine) is linked at C62. S131 is modified (phosphoserine). N-linked (GlcNAc...) asparagine glycosylation is found at N288 and N291. In terms of domain architecture, VWFA spans 293–453 (SKNLVFVIDI…FNFLEVMSME (161 aa)). T405 and T410 each carry phosphothreonine. The N-linked (GlcNAc...) asparagine glycan is linked to N591. T656 carries O-linked (GalNAc...) threonine glycosylation. Position 675 is an aspartate 1-(chondroitin 4-sulfate)-ester (D675). The propeptide occupies 676–914 (PHFIIYVPQK…HTDYIVPDIF (239 aa)).

This sequence belongs to the ITIH family. As to quaternary structure, I-alpha-I plasma protease inhibitors are assembled from one or two heavy chains (HC) and one light chain, bikunin. Inter-alpha-inhibitor (I-alpha-I) is composed of ITIH1/HC1, ITIH2/HC2 and bikunin. Interacts with TNFAIP6 (via Link and CUB domains). Heavy chains are linked to bikunin via chondroitin 4-sulfate esterified to the alpha-carboxyl of the C-terminal aspartate after propeptide cleavage. Post-translationally, the S-linked glycan is composed of two 6-carbon sugars, possibly Glc or Gal.

It localises to the secreted. In terms of biological role, may act as a carrier of hyaluronan in serum or as a binding protein between hyaluronan and other matrix protein, including those on cell surfaces in tissues to regulate the localization, synthesis and degradation of hyaluronan which are essential to cells undergoing biological processes. The chain is Inter-alpha-trypsin inhibitor heavy chain H1 (ITIH1) from Mesocricetus auratus (Golden hamster).